Here is a 766-residue protein sequence, read N- to C-terminus: Subtilisin-like protease SBT4.15 (766 aa).

Positions 1–23 (MVSNQRVRLFMLCFCLVNNAVIA) are cleaved as a signal peptide. The propeptide at 24–113 (ATEDENVERK…VFKNTQRQLH (90 aa)) is activation peptide. The 79-residue stretch at 35–113 (YIVYMGEATE…VFKNTQRQLH (79 aa)) folds into the Inhibitor I9 domain. A Peptidase S8 domain is found at 117 to 601 (SWDFLGLVES…SGQINPRRAI (485 aa)). The active-site Charge relay system is the aspartate 144. The N-linked (GlcNAc...) asparagine glycan is linked to asparagine 175. The active-site Charge relay system is histidine 210. N-linked (GlcNAc...) asparagine glycans are attached at residues asparagine 233, asparagine 376, and asparagine 465. A PA domain is found at 365–460 (MYPLTSGSLA…YVFFEDGTKI (96 aa)). The Charge relay system role is filled by serine 543. N-linked (GlcNAc...) asparagine glycosylation is found at asparagine 624, asparagine 638, and asparagine 668.

This sequence belongs to the peptidase S8 family. In terms of processing, the C-terminal propeptide is autocleaved.

The protein resides in the secreted. The chain is Subtilisin-like protease SBT4.15 from Arabidopsis thaliana (Mouse-ear cress).